The chain runs to 423 residues: COP9 signalosome complex subunit 3 (423 aa).

An N-acetylalanine modification is found at A2. The PCI domain maps to 197–365 (NFERALYFYE…GMVSFHDNPE (169 aa)). Positions 402–423 (QFVQKSMGSQEDDSGNKPSSYS) are disordered. A phosphoserine mark is found at S407, S410, and S423.

It belongs to the CSN3 family. Component of the CSN complex, composed of COPS1/GPS1, COPS2, COPS3, COPS4, COPS5, COPS6, COPS7 (COPS7A or COPS7B), COPS8 and COPS9. In the complex, it probably interacts directly with COPS1, COPS4, COPS8 and COPS9. Interacts with CK2 and PKD. Interacts with the translation initiation factor EIF3S6 and IKBKG. Interacts with ERCC6.

The protein resides in the cytoplasm. It localises to the nucleus. Functionally, component of the COP9 signalosome complex (CSN), a complex involved in various cellular and developmental processes. The CSN complex is an essential regulator of the ubiquitin (Ubl) conjugation pathway by mediating the deneddylation of the cullin subunits of SCF-type E3 ligase complexes, leading to decrease the Ubl ligase activity of SCF-type complexes such as SCF, CSA or DDB2. The complex is also involved in phosphorylation of p53/TP53, c-jun/JUN, IkappaBalpha/NFKBIA, ITPK1 and IRF8/ICSBP, possibly via its association with CK2 and PKD kinases. CSN-dependent phosphorylation of TP53 and JUN promotes and protects degradation by the Ubl system, respectively. Essential to maintain the survival of epiblast cells and thus the development of the postimplantation embryo. The sequence is that of COP9 signalosome complex subunit 3 (Cops3) from Rattus norvegicus (Rat).